The primary structure comprises 426 residues: Adenylosuccinate synthetase (426 aa).

Residues Gly-11 to Lys-17 and Gly-39 to Thr-41 contribute to the GTP site. The active-site Proton acceptor is Asp-12. Residues Asp-12 and Gly-39 each contribute to the Mg(2+) site. Residues Asp-12–Lys-15, Asn-37–His-40, Thr-130, Arg-144, Asn-226, Thr-241, and Arg-305 each bind IMP. The Proton donor role is filled by His-40. Val-301–Arg-307 contributes to the substrate binding site. Residues Arg-307, Lys-333–Asp-335, and Gly-415–Gly-417 each bind GTP.

This sequence belongs to the adenylosuccinate synthetase family. In terms of assembly, homodimer. The cofactor is Mg(2+).

It localises to the cytoplasm. It catalyses the reaction IMP + L-aspartate + GTP = N(6)-(1,2-dicarboxyethyl)-AMP + GDP + phosphate + 2 H(+). It functions in the pathway purine metabolism; AMP biosynthesis via de novo pathway; AMP from IMP: step 1/2. Its function is as follows. Plays an important role in the de novo pathway and in the salvage pathway of purine nucleotide biosynthesis. Catalyzes the first committed step in the biosynthesis of AMP from IMP. The chain is Adenylosuccinate synthetase from Meyerozyma guilliermondii (strain ATCC 6260 / CBS 566 / DSM 6381 / JCM 1539 / NBRC 10279 / NRRL Y-324) (Yeast).